The sequence spans 691 residues: Elongation factor G (691 aa).

The tr-type G domain maps to 8 to 282 (ERVRNIGIAA…AVVDYLPAPV (275 aa)). Residues 17–24 (AHIDAGKT), 81–85 (DTPGH), and 135–138 (NKMD) each bind GTP.

This sequence belongs to the TRAFAC class translation factor GTPase superfamily. Classic translation factor GTPase family. EF-G/EF-2 subfamily.

The protein resides in the cytoplasm. Catalyzes the GTP-dependent ribosomal translocation step during translation elongation. During this step, the ribosome changes from the pre-translocational (PRE) to the post-translocational (POST) state as the newly formed A-site-bound peptidyl-tRNA and P-site-bound deacylated tRNA move to the P and E sites, respectively. Catalyzes the coordinated movement of the two tRNA molecules, the mRNA and conformational changes in the ribosome. The chain is Elongation factor G from Prochlorococcus marinus (strain MIT 9515).